Here is a 399-residue protein sequence, read N- to C-terminus: Elongation factor Tu (399 aa).

One can recognise a tr-type G domain in the interval 10–204 (KPHVNIGTIG…AVDANIPEPV (195 aa)). The G1 stretch occupies residues 19–26 (GHVDHGKT). 19–26 (GHVDHGKT) serves as a coordination point for GTP. T26 contributes to the Mg(2+) binding site. A G2 region spans residues 60 to 64 (GITIN). Positions 81–84 (DCPG) are G3. GTP contacts are provided by residues 81-85 (DCPGH) and 136-139 (NKCD). The segment at 136–139 (NKCD) is G4. Residues 174–176 (SGL) form a G5 region.

The protein belongs to the TRAFAC class translation factor GTPase superfamily. Classic translation factor GTPase family. EF-Tu/EF-1A subfamily. As to quaternary structure, monomer.

Its subcellular location is the cytoplasm. The enzyme catalyses GTP + H2O = GDP + phosphate + H(+). Its function is as follows. GTP hydrolase that promotes the GTP-dependent binding of aminoacyl-tRNA to the A-site of ribosomes during protein biosynthesis. The polypeptide is Elongation factor Tu (Synechococcus sp. (strain RCC307)).